The primary structure comprises 176 residues: Prepronociceptin (176 aa).

The N-terminal stretch at Met1 to Ser19 is a signal peptide. 2 consecutive propeptides follow at residues Ser20–Leu95 and Thr169–Val176.

This sequence belongs to the opioid neuropeptide precursor family. Specific enzymatic cleavages at paired basic residues probably yield other active peptides besides nociceptin. Post-translationally, the N-terminal domain contains 6 conserved cysteines thought to be involved in disulfide bonding and/or processing. As to expression, predominantly expressed in the brain and spinal cord. Also expressed and secreted by peripheral blood neutrophils following degranulation.

The protein localises to the secreted. Functionally, ligand of the opioid receptor-like receptor OPRL1. It may act as a transmitter in the brain by modulating nociceptive and locomotor behavior. May be involved in neuronal differentiation and development. Its function is as follows. Blocks nociceptin action in pain transmission by inhibiting nociceptin-induced hyperalgesia and allodynia. In terms of biological role, has potent analgesic activity. The chain is Prepronociceptin (PNOC) from Homo sapiens (Human).